Consider the following 485-residue polypeptide: Probable cobyric acid synthase (485 aa).

The 186-residue stretch at 250 to 435 folds into the GATase cobBQ-type domain; the sequence is EIEVAVIRLP…LHGLFDNRNI (186 aa). The active-site Nucleophile is the Cys328. His427 is a catalytic residue.

The protein belongs to the CobB/CobQ family. CobQ subfamily.

It functions in the pathway cofactor biosynthesis; adenosylcobalamin biosynthesis. In terms of biological role, catalyzes amidations at positions B, D, E, and G on adenosylcobyrinic A,C-diamide. NH(2) groups are provided by glutamine, and one molecule of ATP is hydrogenolyzed for each amidation. This chain is Probable cobyric acid synthase, found in Methanosarcina mazei (strain ATCC BAA-159 / DSM 3647 / Goe1 / Go1 / JCM 11833 / OCM 88) (Methanosarcina frisia).